A 217-amino-acid chain; its full sequence is U exon protein (217 aa).

Disordered regions lie at residues isoleucine 79–valine 113 and lysine 171–arginine 217. Basic residues predominate over residues arginine 188 to cysteine 197. Positions glycine 202 to arginine 217 are enriched in polar residues.

This sequence belongs to the adenoviridae U exon protein family.

The protein localises to the host nucleus. The protein resides in the host nucleoplasm. It localises to the host nucleolus. Functionally, might play a role in viral replication since it is associated with viral replication centers. Seems to have an effect on DBP localization. This is U exon protein from Human adenovirus C serotype 5 (HAdV-5).